The following is a 113-amino-acid chain: Mitochondrial import inner membrane translocase subunit TIM14 (113 aa).

Topologically, residues 1–4 (MATP) are mitochondrial intermembrane. A helical membrane pass occupies residues 5–22 (IIVGATIAGIAYSSRFLI). The Mitochondrial matrix segment spans residues 23–113 (RVIQRAKSKQ…RNVLSSKNSN (91 aa)). In terms of domain architecture, J spans 59–113 (EAANILGLKEESTKEEIKIRHKLLMIKNHPDKGGSSYLATKINEARNVLSSKNSN).

Belongs to the TIM14 family. In terms of assembly, interacts with PHB2; the interaction associates DNAJC19 with the prohibitin complex. Interacts with TIMM16/PAM16. May be a component of the PAM complex at least composed of a mitochondrial HSP70 protein, GRPEL1 or GRPEL2, TIMM44, TIMM16/PAM16 and TIMM14/DNAJC19.

The protein resides in the mitochondrion inner membrane. In terms of biological role, mitochondrial co-chaperone which forms a complex with prohibitins to regulate cardiolipin remodeling. May be a component of the PAM complex, a complex required for the translocation of transit peptide-containing proteins from the inner membrane into the mitochondrial matrix in an ATP-dependent manner. May act as a co-chaperone that stimulate the ATP-dependent activity. This Dictyostelium discoideum (Social amoeba) protein is Mitochondrial import inner membrane translocase subunit TIM14 (dnajc19).